The sequence spans 819 residues: Leucine--tRNA ligase (819 aa).

Positions P40–H51 match the 'HIGH' region motif. The 'KMSKS' region signature appears at K600–S604. ATP is bound at residue K603.

The protein belongs to the class-I aminoacyl-tRNA synthetase family.

Its subcellular location is the cytoplasm. The catalysed reaction is tRNA(Leu) + L-leucine + ATP = L-leucyl-tRNA(Leu) + AMP + diphosphate. This Chlamydia trachomatis serovar A (strain ATCC VR-571B / DSM 19440 / HAR-13) protein is Leucine--tRNA ligase.